The primary structure comprises 805 residues: Arginine/serine-rich protein PNISR (805 aa).

Polar residues predominate over residues 74–88; the sequence is PNNHGNFQGDSNFNR. Disordered stretches follow at residues 74–331 and 382–805; these read PNNH…EEKE and LTGL…SRSR. Composition is skewed to pro residues over residues 100 to 115 and 183 to 195; these read PPHP…PTPG and YWQP…PAPP. The span at 197–210 shows a compositional bias: basic and acidic residues; it reads NRRERPSSFRDRQR. Serine 204 and serine 211 each carry phosphoserine. Residue lysine 218 forms a Glycyl lysine isopeptide (Lys-Gly) (interchain with G-Cter in SUMO2) linkage. Residues 237–276 adopt a coiled-coil conformation; the sequence is REGLEKMEREKQKKLEKERMEQQRSQLSKKEKKATEDAEG. Residues 238 to 258 are compositionally biased toward basic and acidic residues; the sequence is EGLEKMEREKQKKLEKERMEQ. 4 positions are modified to phosphoserine: serine 290, serine 304, serine 313, and serine 321. The span at 290–299 shows a compositional bias: acidic residues; sequence SDEEEEDTEN. Over residues 384 to 393 the composition is skewed to gly residues; the sequence is GLGGLGGYGS. The span at 421–463 shows a compositional bias: basic and acidic residues; that stretch reads QKQEAFWRKEKEQQLLHDKQMEEEKQQTERVTKEMNEFIHKEQ. Residues 429–461 are a coiled coil; sequence KEKEQQLLHDKQMEEEKQQTERVTKEMNEFIHK. A phosphoserine mark is found at serine 465 and serine 467. Composition is skewed to basic and acidic residues over residues 470–486 and 494–506; these read EARE…KRTP and EPKK…EKQG. Threonine 485 bears the Phosphothreonine mark. Lysine 496 participates in a covalent cross-link: Glycyl lysine isopeptide (Lys-Gly) (interchain with G-Cter in SUMO2). The span at 508–550 shows a compositional bias: low complexity; sequence SRSGSSSSGSSSSNSRTSSTSSTVSSSSYSSSSGSSRTSSRSS. Composition is skewed to basic residues over residues 551 to 579, 587 to 598, and 607 to 639; these read SPKR…YSRR, ARVKIRDRRRSN, and RRNR…SRDR. Residues 659–721 are compositionally biased toward basic and acidic residues; that stretch reads EAKEQERKKE…KRKRESERTF (63 aa). The stretch at 673–703 forms a coiled coil; sequence IDKDRKKKDKEREREQDKRKEKQKREEKDFK. A Glycyl lysine isopeptide (Lys-Gly) (interchain with G-Cter in SUMO2) cross-link involves residue lysine 703. A Phosphoserine modification is found at serine 726. The span at 732–753 shows a compositional bias: basic and acidic residues; that stretch reads IRHDSRQDSKKSTTKDSKKHSG. Positions 754–767 are enriched in low complexity; the sequence is SDSSGRSSSESPGS. Composition is skewed to basic residues over residues 771 to 781 and 789 to 805; these read KKAKKPKHSRS and RSGK…SRSR.

The protein belongs to the splicing factor SR family. Interacts with PNN. Expressed in heart, skeletal muscle, thymus, spleen, kidney, liver, placenta and leukocytes.

The protein resides in the nucleus speckle. The sequence is that of Arginine/serine-rich protein PNISR (PNISR) from Homo sapiens (Human).